The sequence spans 1411 residues: Protein three rows (1411 aa).

The tract at residues 1065-1071 is separase cleavage-site; sequence VEPIRKQ. Disordered stretches follow at residues 1221–1240, 1268–1301, and 1330–1411; these read LEPP…NISP, VRPA…KSPK, and AKST…RHRN. Composition is skewed to low complexity over residues 1270 to 1289 and 1386 to 1398; these read PASS…NASS and TAEQ…TATP.

Interacts with pim and Sse. Cleavage of thr contributes to inactivation of Sse.

It localises to the cytoplasm. Its function is as follows. Required specifically for chromosome disjunction during all mitoses; maternally provided protein is sufficient until mitosis 14 then zygotic protein is required. Involved in formation and/or maintenance of epithelial structures: bud extension during Malpighian tubule development, and foregut and hindgut morphogenesis. The protein is Protein three rows (thr) of Drosophila virilis (Fruit fly).